We begin with the raw amino-acid sequence, 473 residues long: BPI fold-containing family B member 3 (473 aa).

An N-terminal signal peptide occupies residues 1–20 (MMLGVYTLLLLWGLATPCLG). N-linked (GlcNAc...) asparagine glycosylation is present at Asn-139. The cysteines at positions 161 and 196 are disulfide-linked.

The protein belongs to the BPI/LBP/Plunc superfamily. BPI/LBP family.

It is found in the secreted. May have the capacity to recognize and bind specific classes of odorants. May act as a carrier molecule, transporting odorants across the mucus layer to access receptor sites. May serve as a primary defense mechanism by recognizing and removing potentially harmful odorants or pathogenic microorganisms from the mucosa or clearing excess odorant from mucus to enable new odorant stimuli to be received. This chain is BPI fold-containing family B member 3, found in Mus musculus (Mouse).